The sequence spans 226 residues: Late protein I226R (226 aa).

An N-terminal signal peptide occupies residues 1–16 (MKMETFLVCLFHNADG). N-linked (GlcNAc...) asparagine; by host glycans are attached at residues asparagine 142 and asparagine 164.

It belongs to the asfivirus I226R family.

In terms of biological role, plays a role in the inhibition of host NF-kappa-B and IRF3 signaling pathways. Mechanistically, promotes the degradation of host IKBKG through enhancing its ubiquitination leading to inhibition of both pathways. The chain is Late protein I226R from African swine fever virus (isolate Tick/South Africa/Pretoriuskop Pr4/1996) (ASFV).